Reading from the N-terminus, the 329-residue chain is MADLLSVLQDKLSGKNVKIVLPEGEDERVLIAATQLQKTDYVSPIVLGNEDNIKSLASKHALDLTQIEIIDPATSELKDELVDAFVERRKGKATKEQAVELLDNVNYFGTMLVYTGKAEGLVSGAAHSTGDTVRPALQIIKTKPGVSRTSGIFFMIKGDEQYIFGDCAINPELDAQGLAEIAVESAKSAQSFGMDPKVAMLSFSTKGSAKSDDVTKVQEALKLAQEKAEADQLDHVVIDGEFQFDAAIVPSVAEKKAPGAKIQGDANVFVFPSLEAGNIGYKIAQRLGGYDAVGPVLQGLNSPVNDLSRGCSTEDVYNLSIITAAQALQ.

This sequence belongs to the phosphate acetyltransferase and butyryltransferase family.

Its subcellular location is the cytoplasm. It carries out the reaction acetyl-CoA + phosphate = acetyl phosphate + CoA. It participates in metabolic intermediate biosynthesis; acetyl-CoA biosynthesis; acetyl-CoA from acetate: step 2/2. The protein is Phosphate acetyltransferase (pta) of Staphylococcus epidermidis (strain ATCC 12228 / FDA PCI 1200).